A 301-amino-acid chain; its full sequence is Protoheme IX farnesyltransferase (301 aa).

9 helical membrane-spanning segments follow: residues 20–42, 55–75, 105–125, 126–146, 150–172, 176–198, 227–247, 249–269, and 280–300; these read FTEL…GMWL, VDVI…SGAF, ALMV…MTTW, QAGV…SLYA, LVSN…WFAV, FSMV…FYAI, MFFW…LGIV, VILA…GFKM, and FIYS…ISIF.

Belongs to the UbiA prenyltransferase family. Protoheme IX farnesyltransferase subfamily. Interacts with CtaA.

Its subcellular location is the cell membrane. The enzyme catalyses heme b + (2E,6E)-farnesyl diphosphate + H2O = Fe(II)-heme o + diphosphate. The protein operates within porphyrin-containing compound metabolism; heme O biosynthesis; heme O from protoheme: step 1/1. Functionally, converts heme B (protoheme IX) to heme O by substitution of the vinyl group on carbon 2 of heme B porphyrin ring with a hydroxyethyl farnesyl side group. This chain is Protoheme IX farnesyltransferase, found in Listeria welshimeri serovar 6b (strain ATCC 35897 / DSM 20650 / CCUG 15529 / CIP 8149 / NCTC 11857 / SLCC 5334 / V8).